A 372-amino-acid chain; its full sequence is Beta sliding clamp (372 aa).

Belongs to the beta sliding clamp family. In terms of assembly, forms a ring-shaped head-to-tail homodimer around DNA which binds and tethers DNA polymerases and other proteins to the DNA. The DNA replisome complex has a single clamp-loading complex (3 tau and 1 each of delta, delta', psi and chi subunits) which binds 3 Pol III cores (1 core on the leading strand and 2 on the lagging strand) each with a beta sliding clamp dimer. Additional proteins in the replisome are other copies of gamma, psi and chi, Ssb, DNA helicase and RNA primase.

The protein resides in the cytoplasm. In terms of biological role, confers DNA tethering and processivity to DNA polymerases and other proteins. Acts as a clamp, forming a ring around DNA (a reaction catalyzed by the clamp-loading complex) which diffuses in an ATP-independent manner freely and bidirectionally along dsDNA. Initially characterized for its ability to contact the catalytic subunit of DNA polymerase III (Pol III), a complex, multichain enzyme responsible for most of the replicative synthesis in bacteria; Pol III exhibits 3'-5' exonuclease proofreading activity. The beta chain is required for initiation of replication as well as for processivity of DNA replication. In Caulobacter vibrioides (strain ATCC 19089 / CIP 103742 / CB 15) (Caulobacter crescentus), this protein is Beta sliding clamp (dnaN).